The primary structure comprises 298 residues: Tyrosine recombinase XerD (298 aa).

The Core-binding (CB) domain maps to 3-88 (ALDHPLIDQF…GLRGFFRYLL (86 aa)). Residues 109–292 (PLPKSLSEAD…AKARLQQLHA (184 aa)) enclose the Tyr recombinase domain. Catalysis depends on residues Arg-149, Lys-173, His-244, Arg-247, and His-270. The active-site O-(3'-phospho-DNA)-tyrosine intermediate is the Tyr-279.

The protein belongs to the 'phage' integrase family. XerD subfamily. As to quaternary structure, forms a cyclic heterotetrameric complex composed of two molecules of XerC and two molecules of XerD.

It localises to the cytoplasm. Functionally, site-specific tyrosine recombinase, which acts by catalyzing the cutting and rejoining of the recombining DNA molecules. The XerC-XerD complex is essential to convert dimers of the bacterial chromosome into monomers to permit their segregation at cell division. It also contributes to the segregational stability of plasmids. This is Tyrosine recombinase XerD from Pseudomonas putida (strain ATCC 47054 / DSM 6125 / CFBP 8728 / NCIMB 11950 / KT2440).